Consider the following 294-residue polypeptide: Thymidylate synthase (294 aa).

Residues R31 and 156-157 (RR) each bind dUMP. C176 serves as the catalytic Nucleophile. DUMP is bound by residues 196 to 199 (RSAD), N207, and 237 to 239 (HIY). (6R)-5,10-methylene-5,6,7,8-tetrahydrofolate is bound at residue D199. A293 serves as a coordination point for (6R)-5,10-methylene-5,6,7,8-tetrahydrofolate.

It belongs to the thymidylate synthase family. As to quaternary structure, homodimer.

The enzyme catalyses dUMP + (6R)-5,10-methylene-5,6,7,8-tetrahydrofolate = 7,8-dihydrofolate + dTMP. Its pathway is pyrimidine metabolism; dTTP biosynthesis. This chain is Thymidylate synthase (70), found in Saimiri sciureus (Common squirrel monkey).